We begin with the raw amino-acid sequence, 623 residues long: MKIFIIKIILVLFNYVLLSYSINQDLNILNVYDVRFAQTHVIPIEGKSWILNNKTYTLTIVGNRDSLLLVKFIDISITGTSSIKTVTTKTTKEEIKATILTNTYNVMVWNNDIVMGTRLLNDPNQLPPTESNGEQYSNEHHSIMIPKEWVKPGMKLQFFENSNSFIKSSKFIFPNVGQDYTLKMWTLPFYLFGANDTNTRPFNQTKNIDDSISAGLSQVYSCSNILSLNHPIQRVDWPYLVLGPRNGLPGMLITNSDQKKDGYAIMEGVLNILTGIRVAFGESTSSIQIYAPLLHLGANGKYADTYGGLGGSSRGTGDYRYSDTFVHEQGHAMGLPHAGEAFASGSYPYVNGSLLGSEWGFDINHYEFLSITLSNTSKNYKGCEKKNVKDTQNRCVKQSVMQSGAGDRSSNYLFSMFSDFEMSIIQNYFKNSIYYDEQIGKYKKWNETIGSYYEYKPITKDYGFYRLDDGIPIERDIDVYTIVFTYSLVGPEPLSQIYPLLKSKGNLIRQFDPTNKTEMKLITPNTGSIPWYCFNSGCDYTIRVTYDDDSIKHILLQQGKRQYWKPMGDFKLNFNDPTSSDSFLLGVINVKAIKTIKKVELLETLMAWNGISKNSKLLTFKLF.

The N-terminal stretch at 1–21 (MKIFIIKIILVLFNYVLLSYS) is a signal peptide. Positions 174–435 (PNVGQDYTLK…QNYFKNSIYY (262 aa)) constitute a Peptidase M66 domain. His-327 is a binding site for Zn(2+). The active site involves Glu-328. Zn(2+) contacts are provided by His-331 and His-337.

It belongs to the dictomallein family. Requires Zn(2+) as cofactor.

The protein resides in the secreted. The polypeptide is Dictomallein-5 (dtmlE) (Dictyostelium discoideum (Social amoeba)).